A 773-amino-acid polypeptide reads, in one-letter code: Circadian clock protein PASD1 (773 aa).

In terms of domain architecture, PAS spans 30 to 102 (YDYFNQVTLQ…IILKFPLLNS (73 aa)). The tract at residues 313-361 (SVDQEGPMDQQDPENPVAPLDQAGLMDPVDPEDSVDLGAAGASAQPLQP) is disordered. Residues 365–412 (VAYDIISQELELMKKLKEQLEERTWLLHDAIQNQQNALELMMDHLQKQ) form a necessary for transcriptional repression region. The stretch at 365–412 (VAYDIISQELELMKKLKEQLEERTWLLHDAIQNQQNALELMMDHLQKQ) forms a coiled coil. Disordered stretches follow at residues 427–448 (SEAVPKKQQKQHAGQVKRPLPH), 506–569 (QRKV…QLQE), and 732–773 (GVEG…NKPC). Positions 475–553 (VAFNQQQLVQ…QERKKWQGQM (79 aa)) form a coiled coil. Positions 506-536 (QRKVQKQKKMQEKKKLQEQKMQEKKKLQEQR) are enriched in basic and acidic residues.

Interacts with the CLOCK-BMAL1 heterodimer; this interaction inhibits CLOCK-BMAL1 transcriptional activation and suppress circadian timekeeping. Interacts with BMAL1. As to expression, testis-specific. Expressed in a broad range of cancer cells, including melanoma, lung cancer, and breast cancer (at protein level). Testis-specific. Found in histologically normal tissues from patients with uterus, lung and small intestine cancers. Widespread expression seen in solid tumors and diffuse large B-cell lymphoma (DLBCL)-derived cell lines. Isoform 2 is expressed in all DLBCL-derived cell lines, while isoform 1 is preferentially expressed in cell lines derived from non-germinal center DLBCL.

Its subcellular location is the nucleus. Functionally, functions as a suppressor of the biological clock that drives the daily circadian rhythms of cells throughout the body. Acts as a nuclear repressor of the CLOCK-BMAL1 heterodimer-mediated transcriptional activation of the core clock components. Inhibits circadian clock function in cancer cells, when overexpressed. The sequence is that of Circadian clock protein PASD1 from Homo sapiens (Human).